A 1085-amino-acid chain; its full sequence is Solute carrier family 12 member 4 (1085 aa).

Topologically, residues 1-119 (MPHFTVVPVD…RRAAKAPSMG (119 aa)) are cytoplasmic. Phosphoserine is present on residues serine 24, serine 47, serine 81, and serine 88. The discontinuously helical transmembrane segment at 120–141 (TLMGVYLPCLQNIFGVILFLRL) threads the bilayer. K(+)-binding residues include asparagine 131 and isoleucine 132. Topologically, residues 142–149 (TWMVGTAG) are extracellular. A helical membrane pass occupies residues 150-172 (VLQALLIVLICCCCTLLTAISMS). Over 173-196 (AIATNGVVPAGGSYFMISRSLGPE) the chain is Cytoplasmic. Residues 197-225 (FGGAVGLCFYLGTTFAAAMYILGAIEILL) form a helical membrane-spanning segment. Tyrosine 216 serves as a coordination point for K(+). Residues 226–248 (TYIAPPAAIFYPSGTHDMSSATL) lie on the Extracellular side of the membrane. Transmembrane regions (helical) follow at residues 249-271 (NNMR…VGVK) and 272-297 (YVNK…GGIK). The Extracellular portion of the chain corresponds to 298-419 (SIFDPPVFPV…LYVVADIATS (122 aa)). Cysteine 308 and cysteine 323 are joined by a disulfide. Residues asparagine 312, asparagine 331, and asparagine 347 are each glycosylated (N-linked (GlcNAc...) asparagine). Cysteine 343 and cysteine 353 are oxidised to a cystine. Residues 420 to 440 (FTVLVGIFFPSVTGIMAGSNR) traverse the membrane as a helical segment. K(+) contacts are provided by proline 429 and threonine 432. Glycine 433, isoleucine 434, and methionine 435 together coordinate chloride. Topologically, residues 441 to 450 (SGDLRDAQKS) are cytoplasmic. The helical transmembrane segment at 451-473 (IPVGTILAIVTTSLVYFSSVILF) threads the bilayer. The Extracellular portion of the chain corresponds to 474-504 (GACIEGVVLRDKYGDGVSRNLVVGTLAWPSP). Residues 505–531 (WVIVVGSFFSTCGAGLQSLTGAPRLLQ) traverse the membrane as a helical segment. At 532-554 (AIAKDNIIPFLRVFGHGKANGEP) the chain is on the cytoplasmic side. Transmembrane regions (helical) follow at residues 555–575 (TWAL…ASLD) and 576–598 (MVAP…ACAV). A chloride-binding site is contributed by tyrosine 589. Residues 599 to 612 (QTLLRTPNWRPRFK) lie on the Cytoplasmic side of the membrane. A run of 2 helical transmembrane segments spans residues 613–635 (YYHW…VSSW) and 636–651 (YYAL…IYKY). Residues 652–1085 (IEYQGAEKEW…GGREVITIYS (434 aa)) lie on the Cytoplasmic side of the membrane. The scissor helix stretch occupies residues 665–681 (IRGLSLSAARYALLRLE). ATP contacts are provided by leucine 697, lysine 699, lysine 707, tyrosine 708, and valine 730. The residue at position 734 (serine 734) is a Phosphoserine. Residues glycine 794, tryptophan 795, and tyrosine 797 each contribute to the ATP site. Phosphoserine is present on residues serine 916 and serine 967. Threonine 983 carries the post-translational modification Phosphothreonine. Residue serine 1050 is modified to Phosphoserine.

It belongs to the SLC12A transporter family. K/Cl co-transporter subfamily. Homodimer; adopts a domain-swap conformation at the scissor helices connecting the transmembrane domain and C-terminal domain. Heterodimer with other K-Cl cotransporters. Post-translationally, phosphorylated, phosphorylation may regulate transporter activity. Detected in embryo, adult heart, erythrocytes, brain, kidney, stomach, ovary, testis and liver.

Its subcellular location is the cell membrane. It catalyses the reaction K(+)(in) + chloride(in) = K(+)(out) + chloride(out). With respect to regulation, inhibited by WNK3. Its function is as follows. Mediates electroneutral potassium-chloride cotransport when activated by cell swelling. May contribute to cell volume homeostasis in single cells. May be involved in the regulation of basolateral Cl(-) exit in NaCl absorbing epithelia. The sequence is that of Solute carrier family 12 member 4 (Slc12a4) from Mus musculus (Mouse).